We begin with the raw amino-acid sequence, 170 residues long: Adenine phosphoribosyltransferase (170 aa).

This sequence belongs to the purine/pyrimidine phosphoribosyltransferase family. Homodimer.

Its subcellular location is the cytoplasm. It carries out the reaction AMP + diphosphate = 5-phospho-alpha-D-ribose 1-diphosphate + adenine. It participates in purine metabolism; AMP biosynthesis via salvage pathway; AMP from adenine: step 1/1. Functionally, catalyzes a salvage reaction resulting in the formation of AMP, that is energically less costly than de novo synthesis. This is Adenine phosphoribosyltransferase from Lactococcus lactis subsp. cremoris (strain SK11).